We begin with the raw amino-acid sequence, 820 residues long: MTEQLLLHGTLEVKIYRIDKLHQRSRFNLCGKGNKEPTGKKTQSQIKRLTDSCTSLFGGHLYATIDLDRSRVARTMMRRHPKWLQSFHVYTAHSISKIIFTVKEDEPVSASLIGRAYLPVTEVITGQPIDRWLDILDENRRPIQGGSKLHVRVKFTHVTQDVNWNKGIILPSFNGVPNAYFNQREGCKVTLYQDAHVLNEYPDVTLTGGQVIYKHHRCWEEIFDAIWEAKHLIYIAGWSVNTDVTLVRDPKRTRPGGDLKLGELLKKKAEENVTVLMLVWDDRTSHEVFKRDGLMMTHDQETYDYFKNTKVRCVLCPRNPDNGDSIVQGFEVATMFTHHQKTIVVDSEVDGSLTKRRIVSFLGGIDLCDGRYDTVEHPLFGTLNSVHANDFHQPNFDGASIKKGGPREPWHDIHCKLDGPAAWDVLYNFEQRWMKQGSGRRYLISMAQLAEITVPPLPIVQPDNEEGWTVQVFRSIDDGAVEGFPEDPREAASIGLISGKDNVIERSIQDAYVNAIRRAKNFIYIENQYFLGSSFGWNSRDINLNEINALQLIPKEISLKIVSKIEAGERFSVYIVIPLWPEGKPGSASVQAILDWQRRTMEMMYTDIIIALRKKGLDANPRDYLTFFCLGNREKGKVGEYLPPEKPEANSDYARAQESRRFMIYVHSKMMIVDDEYIIIGSANINQRSMDGGRDTEIAMGAYQPSHLLSTNNMRPVGQIFSFRISLWLEHLRVTTNAFQCPESEECIRMVNATADELWGLYSAQEYPRNDDLPGHLLSYPISIGSNGEVTNLAGTEFFPDTNAKVVGEKSNYLPPILTS.

Residues 1–133 enclose the C2 domain; sequence MTEQLLLHGT…ITGQPIDRWL (133 aa). A Ca(2+)-binding site is contributed by Asp194. The PLD phosphodiesterase 1 domain occupies 334-371; sequence TMFTHHQKTIVVDSEVDGSLTKRRIVSFLGGIDLCDGR. Residues His339, Lys341, and Asp346 contribute to the active site. His339 contacts a 1,2-diacyl-sn-glycero-3-phosphate. Residues His377 and His411 each contribute to the Ca(2+) site. Gln528 and His667 together coordinate a 1,2-diacyl-sn-glycero-3-phosphate. In terms of domain architecture, PLD phosphodiesterase 2 spans 662 to 689; sequence FMIYVHSKMMIVDDEYIIIGSANINQRS. Active-site residues include His667, Lys669, and Asp674. Glu730 lines the Ca(2+) pocket.

This sequence belongs to the phospholipase D family. C2-PLD subfamily. Ca(2+) serves as cofactor. Expressed in buds, flowers, siliques, stems, old leaves and roots. Expressed in the sieve elements.

Its subcellular location is the cytoplasm. The protein resides in the membrane. It carries out the reaction a 1,2-diacyl-sn-glycero-3-phosphocholine + H2O = a 1,2-diacyl-sn-glycero-3-phosphate + choline + H(+). Functionally, hydrolyzes glycerol-phospholipids at the terminal phosphodiesteric bond to generate phosphatidic acids (PA). Active with phosphatidylcholine (PC), phosphatidylethanolamine (PE), phosphatidylglycerol (PG), and phosphatidylserine (PS) as substrates. No activity toward phosphatidylinositol (PI) or PIP2. Positively mediates plant responses to hyperosmotic stresses and promotes root growth, flowering, and stress avoidance. Not involved in the abscisic acid regulation of stomatal movement and transpirational water loss. The polypeptide is Phospholipase D alpha 3 (Arabidopsis thaliana (Mouse-ear cress)).